The primary structure comprises 251 residues: UPF0309 protein SCO4393 (251 aa).

In terms of domain architecture, SIS spans 36–220 (LADTVQNGGR…AATLADRGIE (185 aa)).

The protein belongs to the UPF0309 family.

The protein is UPF0309 protein SCO4393 of Streptomyces coelicolor (strain ATCC BAA-471 / A3(2) / M145).